The primary structure comprises 434 residues: Adenylosuccinate synthetase (434 aa).

Residues 22 to 28 (GDEGKGK) and 50 to 52 (GHT) each bind GTP. Asp23 (proton acceptor) is an active-site residue. Positions 23 and 50 each coordinate Mg(2+). IMP-binding positions include 23–26 (DEGK), 48–51 (NAGH), Thr139, Arg153, Gln234, Thr249, and Arg313. His51 acts as the Proton donor in catalysis. 309–315 (ATTGRKR) is a binding site for substrate. GTP-binding positions include Arg315, 341–343 (KLD), and 423–425 (SVG).

Belongs to the adenylosuccinate synthetase family. Homodimer. Mg(2+) is required as a cofactor.

Its subcellular location is the cytoplasm. It catalyses the reaction IMP + L-aspartate + GTP = N(6)-(1,2-dicarboxyethyl)-AMP + GDP + phosphate + 2 H(+). It functions in the pathway purine metabolism; AMP biosynthesis via de novo pathway; AMP from IMP: step 1/2. In terms of biological role, plays an important role in the de novo pathway of purine nucleotide biosynthesis. Catalyzes the first committed step in the biosynthesis of AMP from IMP. This Chlorobium limicola (strain DSM 245 / NBRC 103803 / 6330) protein is Adenylosuccinate synthetase.